Here is a 773-residue protein sequence, read N- to C-terminus: uncharacterized protein (773 aa).

Positions 192 to 219 are disordered; that stretch reads EASGTNNNPKEIEMNSDTTSSVPKSGST.

The protein resides in the cytoplasm. This is an uncharacterized protein from Schizosaccharomyces pombe (strain 972 / ATCC 24843) (Fission yeast).